The chain runs to 274 residues: Transmembrane O-methyltransferase (274 aa).

Residues 14–34 (VGTMSPAIALAFLPLVVTLLV) form a helical membrane-spanning segment. S-adenosyl-L-methionine contacts are provided by residues Glu120, 122-123 (GT), Ser128, Glu146, and Ser176.

The protein belongs to the class I-like SAM-binding methyltransferase superfamily. Cation-dependent O-methyltransferase family. In terms of assembly, interacts with LHFPL5, PCDH15, TMC1, TMC2 and TMIE. Interacts directly with TMC1. The interaction of TOMT with TMC1 and TMC2 is required for the transportation of TMC1/2 into the stereocilia of hair cells.

It localises to the membrane. Its subcellular location is the cytoplasm. The protein resides in the endoplasmic reticulum. The catalysed reaction is a catechol + S-adenosyl-L-methionine = a guaiacol + S-adenosyl-L-homocysteine + H(+). Functionally, catalyzes the O-methylation, and thereby the inactivation, of catecholamine neurotransmitters and catechol hormones. Required for auditory function. Component of the cochlear hair cell's mechanotransduction (MET) machinery. Involved in the assembly of the asymmetric tip-link MET complex. Required for transportation of TMC1 and TMC2 proteins into the mechanically sensitive stereocilia of the hair cells. The function in MET is independent of the enzymatic activity. This chain is Transmembrane O-methyltransferase, found in Propithecus coquereli (Coquerel's sifaka).